Consider the following 481-residue polypeptide: 2-succinylbenzoate--CoA ligase (481 aa).

It belongs to the ATP-dependent AMP-binding enzyme family. MenE subfamily.

It carries out the reaction 2-succinylbenzoate + ATP + CoA = 2-succinylbenzoyl-CoA + AMP + diphosphate. The protein operates within quinol/quinone metabolism; 1,4-dihydroxy-2-naphthoate biosynthesis; 1,4-dihydroxy-2-naphthoate from chorismate: step 5/7. It functions in the pathway quinol/quinone metabolism; menaquinone biosynthesis. Its function is as follows. Converts 2-succinylbenzoate (OSB) to 2-succinylbenzoyl-CoA (OSB-CoA). The sequence is that of 2-succinylbenzoate--CoA ligase from Bacillus cereus (strain ATCC 10987 / NRS 248).